The following is a 239-amino-acid chain: 4-hydroxy-tetrahydrodipicolinate reductase (239 aa).

Residues 8-13 (GSTGKM), 78-80 (GTT), and 102-105 (SANM) contribute to the NAD(+) site. The active-site Proton donor/acceptor is His-134. Residue His-135 coordinates (S)-2,3,4,5-tetrahydrodipicolinate. The active-site Proton donor is Lys-138. Residue 144–145 (GT) coordinates (S)-2,3,4,5-tetrahydrodipicolinate.

It belongs to the DapB family.

It is found in the cytoplasm. It catalyses the reaction (S)-2,3,4,5-tetrahydrodipicolinate + NAD(+) + H2O = (2S,4S)-4-hydroxy-2,3,4,5-tetrahydrodipicolinate + NADH + H(+). The enzyme catalyses (S)-2,3,4,5-tetrahydrodipicolinate + NADP(+) + H2O = (2S,4S)-4-hydroxy-2,3,4,5-tetrahydrodipicolinate + NADPH + H(+). It participates in amino-acid biosynthesis; L-lysine biosynthesis via DAP pathway; (S)-tetrahydrodipicolinate from L-aspartate: step 4/4. Its function is as follows. Catalyzes the conversion of 4-hydroxy-tetrahydrodipicolinate (HTPA) to tetrahydrodipicolinate. This Rickettsia peacockii (strain Rustic) protein is 4-hydroxy-tetrahydrodipicolinate reductase.